A 130-amino-acid polypeptide reads, in one-letter code: Small ribosomal subunit protein uS9 (130 aa).

The segment at 104–130 (LTRDPRMKERRKYGLKKARKAPQFSKR) is disordered. The span at 111-130 (KERRKYGLKKARKAPQFSKR) shows a compositional bias: basic residues.

The protein belongs to the universal ribosomal protein uS9 family.

This chain is Small ribosomal subunit protein uS9, found in Moorella thermoacetica (strain ATCC 39073 / JCM 9320).